A 63-amino-acid chain; its full sequence is DNA gyrase inhibitor YacG (63 aa).

Positions 9, 12, 28, and 32 each coordinate Zn(2+).

It belongs to the DNA gyrase inhibitor YacG family. As to quaternary structure, interacts with GyrB. It depends on Zn(2+) as a cofactor.

In terms of biological role, inhibits all the catalytic activities of DNA gyrase by preventing its interaction with DNA. Acts by binding directly to the C-terminal domain of GyrB, which probably disrupts DNA binding by the gyrase. In Salmonella arizonae (strain ATCC BAA-731 / CDC346-86 / RSK2980), this protein is DNA gyrase inhibitor YacG.